A 311-amino-acid chain; its full sequence is MTKLLFMGTPDFSATVLKGILADGKYDVLAVVTQPDRAVGRKKEIKMTPVKEVALENNIPVYQPEKLSGSPELEQLMTLGADGIVTAAFGQFLPTKLLESVGFAINVHASLLPKYRGGAPIHYAIINGEKEAGVTIMEMVAKMDAGDMVSKASVEITDEDNVGTMFDRLAVVGRDLLLDTLPGYLSGDIKPIPQNEEEVSFSPNISPDEERIDWNKSSRDIFNHVRGMYPWPVAHTLLEGNRFKLYEVTMSEGKGSPGQVIAKTKNSLTVATGDGAIELKSVQPAGKPRMDIKDFLNGVGRNLEIGDKFGE.

110–113 (SLLP) contributes to the (6S)-5,6,7,8-tetrahydrofolate binding site.

This sequence belongs to the Fmt family.

The enzyme catalyses L-methionyl-tRNA(fMet) + (6R)-10-formyltetrahydrofolate = N-formyl-L-methionyl-tRNA(fMet) + (6S)-5,6,7,8-tetrahydrofolate + H(+). Its function is as follows. Attaches a formyl group to the free amino group of methionyl-tRNA(fMet). The formyl group appears to play a dual role in the initiator identity of N-formylmethionyl-tRNA by promoting its recognition by IF2 and preventing the misappropriation of this tRNA by the elongation apparatus. This chain is Methionyl-tRNA formyltransferase, found in Streptococcus agalactiae serotype Ia (strain ATCC 27591 / A909 / CDC SS700).